The sequence spans 347 residues: S-adenosylmethionine decarboxylase proenzyme 4 (347 aa).

Residues glutamate 7 and glutamate 10 contribute to the active site. Glutamate 66 lines the substrate pocket. Residue serine 67 is the Schiff-base intermediate with substrate; via pyruvic acid of the active site. The residue at position 67 (serine 67) is a Pyruvic acid (Ser); by autocatalysis. Cysteine 81 (proton donor; for catalytic activity) is an active-site residue. Residues serine 237 and histidine 250 each act as proton acceptor; for processing activity in the active site. Residue glutamate 254 participates in substrate binding.

Belongs to the eukaryotic AdoMetDC family. The cofactor is pyruvate. Is synthesized initially as an inactive proenzyme. Formation of the active enzyme involves a self-maturation process in which the active site pyruvoyl group is generated from an internal serine residue via an autocatalytic post-translational modification. Two non-identical subunits are generated from the proenzyme in this reaction, and the pyruvate is formed at the N-terminus of the alpha chain, which is derived from the carboxyl end of the proenzyme. The post-translation cleavage follows an unusual pathway, termed non-hydrolytic serinolysis, in which the side chain hydroxyl group of the serine supplies its oxygen atom to form the C-terminus of the beta chain, while the remainder of the serine residue undergoes an oxidative deamination to produce ammonia and the pyruvoyl group blocking the N-terminus of the alpha chain.

The catalysed reaction is S-adenosyl-L-methionine + H(+) = S-adenosyl 3-(methylsulfanyl)propylamine + CO2. It functions in the pathway amine and polyamine biosynthesis; S-adenosylmethioninamine biosynthesis; S-adenosylmethioninamine from S-adenosyl-L-methionine: step 1/1. Essential for biosynthesis of the polyamines spermidine and spermine. Essential for polyamine homeostasis, and normal plant embryogenesis, growth and development. This chain is S-adenosylmethionine decarboxylase proenzyme 4, found in Arabidopsis thaliana (Mouse-ear cress).